A 138-amino-acid polypeptide reads, in one-letter code: 1,4-dihydroxy-2-naphthoyl-CoA hydrolase (138 aa).

Residue aspartate 16 is part of the active site.

This sequence belongs to the 4-hydroxybenzoyl-CoA thioesterase family. DHNA-CoA hydrolase subfamily.

It catalyses the reaction 1,4-dihydroxy-2-naphthoyl-CoA + H2O = 1,4-dihydroxy-2-naphthoate + CoA + H(+). It participates in cofactor biosynthesis; phylloquinone biosynthesis. Its pathway is quinol/quinone metabolism; 1,4-dihydroxy-2-naphthoate biosynthesis; 1,4-dihydroxy-2-naphthoate from chorismate: step 7/7. Functionally, catalyzes the specific hydrolysis of 1,4-dihydroxy-2-naphthoyl-CoA (DHNA-CoA) to 1,4-dihydroxy-2-naphthoate (DHNA), a reaction involved in phylloquinone (vitamin K1) biosynthesis. Is not active on benzoyl-CoA, phenylacetyl-CoA and aliphatic acyl-CoA thioesters. The protein is 1,4-dihydroxy-2-naphthoyl-CoA hydrolase of Synechocystis sp. (strain ATCC 27184 / PCC 6803 / Kazusa).